A 110-amino-acid polypeptide reads, in one-letter code: UPF0060 membrane protein Francci3_2786 (110 aa).

Transmembrane regions (helical) follow at residues 8 to 28 (LLFVVAAVTEIGGAWLVWQGV), 33 to 53 (GPVWVGLGIGFLAAYGFVATL), 62 to 82 (ILAAYGGVFVAGSLLWGVAVD), and 87 to 107 (DRYDLAGAAICLLGVAVIMYA).

Belongs to the UPF0060 family.

It is found in the cell membrane. The protein is UPF0060 membrane protein Francci3_2786 of Frankia casuarinae (strain DSM 45818 / CECT 9043 / HFP020203 / CcI3).